The primary structure comprises 143 residues: Probable FAD-linked sulfhydryl oxidase R368 (143 aa).

In terms of domain architecture, ERV/ALR sulfhydryl oxidase spans 10 to 104; the sequence is GWTFSHAVAL…YPEAIEAIEK (95 aa). C46 and C49 are oxidised to a cystine. A helical membrane pass occupies residues 117-137; that stretch reads FFIILIIIGIIVIIYLMYIVF.

FAD is required as a cofactor.

It localises to the membrane. It catalyses the reaction 2 R'C(R)SH + O2 = R'C(R)S-S(R)CR' + H2O2. In terms of biological role, FAD-dependent sulfhydryl oxidase that catalyzes disulfide bond formation. This Acanthamoeba polyphaga mimivirus (APMV) protein is Probable FAD-linked sulfhydryl oxidase R368.